The primary structure comprises 515 residues: Probable 2-isopropylmalate synthase (515 aa).

The Pyruvate carboxyltransferase domain occupies 20-271 (VTVFDTTLRD…KTNIRTEYLV (252 aa)). Positions 29, 209, 211, and 245 each coordinate a divalent metal cation.

This sequence belongs to the alpha-IPM synthase/homocitrate synthase family. Homodimer. A divalent metal cation is required as a cofactor.

It carries out the reaction 3-methyl-2-oxobutanoate + acetyl-CoA + H2O = (2S)-2-isopropylmalate + CoA + H(+). It participates in amino-acid biosynthesis; L-leucine biosynthesis; L-leucine from 3-methyl-2-oxobutanoate: step 1/4. Catalyzes the condensation of the acetyl group of acetyl-CoA with 3-methyl-2-oxobutanoate (2-oxoisovalerate) to form 3-carboxy-3-hydroxy-4-methylpentanoate (2-isopropylmalate). This Methanosarcina acetivorans (strain ATCC 35395 / DSM 2834 / JCM 12185 / C2A) protein is Probable 2-isopropylmalate synthase (leuA).